Here is a 409-residue protein sequence, read N- to C-terminus: Formyl-CoA:oxalate CoA-transferase (409 aa).

Residues 17 to 18, 71 to 74, 95 to 97, Arg103, and 135 to 138 each bind CoA; these read QS, LNTK, NFG, and KAYE. Asp167 acts as the Nucleophile in catalysis. Positions 221-245 are disordered; sequence LAEYPNDDFGDEVPRSGNASGGGQP. 242-244 serves as a coordination point for substrate; that stretch reads GGQ.

This sequence belongs to the CoA-transferase III family. Frc subfamily. In terms of assembly, homodimer.

It carries out the reaction formyl-CoA + oxalate = oxalyl-CoA + formate. The protein operates within metabolic intermediate degradation; oxalate degradation; CO(2) and formate from oxalate: step 1/2. Functionally, involved in the catabolism of oxalate and in the adapatation to low pH via the induction of the oxalate-dependent acid tolerance response (ATR). Catalyzes the transfer of the CoA moiety from formyl-CoA to oxalate. The polypeptide is Formyl-CoA:oxalate CoA-transferase (Streptomyces avermitilis (strain ATCC 31267 / DSM 46492 / JCM 5070 / NBRC 14893 / NCIMB 12804 / NRRL 8165 / MA-4680)).